Here is a 507-residue protein sequence, read N- to C-terminus: ATP synthase subunit alpha, chloroplastic (507 aa).

An ATP-binding site is contributed by 169–176 (IGDRQTGK).

This sequence belongs to the ATPase alpha/beta chains family. As to quaternary structure, F-type ATPases have 2 components, CF(1) - the catalytic core - and CF(0) - the membrane proton channel. CF(1) has five subunits: alpha(3), beta(3), gamma(1), delta(1), epsilon(1). CF(0) has four main subunits: a, b, b' and c.

It is found in the plastid. It localises to the chloroplast thylakoid membrane. It carries out the reaction ATP + H2O + 4 H(+)(in) = ADP + phosphate + 5 H(+)(out). Functionally, produces ATP from ADP in the presence of a proton gradient across the membrane. The alpha chain is a regulatory subunit. This chain is ATP synthase subunit alpha, chloroplastic, found in Saccharum hybrid (Sugarcane).